We begin with the raw amino-acid sequence, 239 residues long: Octanoyl-[acyl-carrier-protein]:protein N-octanoyltransferase LIPT2, mitochondrial (239 aa).

Residues Met-1–Glu-18 constitute a mitochondrion transit peptide. One can recognise a BPL/LPL catalytic domain in the interval Gly-37–Leu-217. Residues Arg-81–His-88, Ala-147–Gly-149, and Gly-160–Ala-162 each bind substrate. The active-site Acyl-thioester intermediate is the Cys-178. The tract at residues Glu-220–Leu-239 is disordered.

Belongs to the LipB family.

Its subcellular location is the mitochondrion. The catalysed reaction is octanoyl-[ACP] + L-lysyl-[protein] = N(6)-octanoyl-L-lysyl-[protein] + holo-[ACP] + H(+). The protein operates within protein modification; protein lipoylation via endogenous pathway; protein N(6)-(lipoyl)lysine from octanoyl-[acyl-carrier-protein]: step 1/2. Functionally, catalyzes the transfer of endogenously produced octanoic acid from octanoyl-acyl-carrier-protein (octanoyl-ACP) onto the lipoyl domains of lipoate-dependent enzymes such as the protein H of the glycine cleavage system (GCSH). Lipoyl-ACP can also act as a substrate although octanoyl-ACP is likely to be the physiological substrate. In Xenopus tropicalis (Western clawed frog), this protein is Octanoyl-[acyl-carrier-protein]:protein N-octanoyltransferase LIPT2, mitochondrial (lipt2).